The sequence spans 214 residues: Probable septum site-determining protein MinC (214 aa).

The protein belongs to the MinC family. As to quaternary structure, interacts with MinD and FtsZ.

Its function is as follows. Cell division inhibitor that blocks the formation of polar Z ring septums. Rapidly oscillates between the poles of the cell to destabilize FtsZ filaments that have formed before they mature into polar Z rings. Prevents FtsZ polymerization. The sequence is that of Probable septum site-determining protein MinC from Thermoanaerobacter pseudethanolicus (strain ATCC 33223 / 39E) (Clostridium thermohydrosulfuricum).